The following is a 432-amino-acid chain: Adenylosuccinate synthetase (432 aa).

GTP contacts are provided by residues 12 to 18 (GDEGKGK) and 40 to 42 (GHT). Residue aspartate 13 is the Proton acceptor of the active site. Mg(2+) contacts are provided by aspartate 13 and glycine 40. Residues 13–16 (DEGK), 38–41 (NAGH), threonine 129, arginine 143, glutamine 224, threonine 239, and arginine 303 contribute to the IMP site. Histidine 41 acts as the Proton donor in catalysis. 299–305 (VTTGRRR) contacts substrate. GTP is bound by residues arginine 305, 331-333 (KLD), and 413-415 (GVG).

This sequence belongs to the adenylosuccinate synthetase family. Homodimer. Requires Mg(2+) as cofactor.

The protein resides in the cytoplasm. It carries out the reaction IMP + L-aspartate + GTP = N(6)-(1,2-dicarboxyethyl)-AMP + GDP + phosphate + 2 H(+). The protein operates within purine metabolism; AMP biosynthesis via de novo pathway; AMP from IMP: step 1/2. Plays an important role in the de novo pathway of purine nucleotide biosynthesis. Catalyzes the first committed step in the biosynthesis of AMP from IMP. This Mycolicibacterium paratuberculosis (strain ATCC BAA-968 / K-10) (Mycobacterium paratuberculosis) protein is Adenylosuccinate synthetase.